A 163-amino-acid polypeptide reads, in one-letter code: ATP synthase subunit b 1 (163 aa).

The chain crosses the membrane as a helical span at residues 5-25 (LDATFFAFVGLVLFLALVVYL).

It belongs to the ATPase B chain family. F-type ATPases have 2 components, F(1) - the catalytic core - and F(0) - the membrane proton channel. F(1) has five subunits: alpha(3), beta(3), gamma(1), delta(1), epsilon(1). F(0) has three main subunits: a(1), b(2) and c(10-14). The alpha and beta chains form an alternating ring which encloses part of the gamma chain. F(1) is attached to F(0) by a central stalk formed by the gamma and epsilon chains, while a peripheral stalk is formed by the delta and b chains.

Its subcellular location is the cell inner membrane. Functionally, f(1)F(0) ATP synthase produces ATP from ADP in the presence of a proton or sodium gradient. F-type ATPases consist of two structural domains, F(1) containing the extramembraneous catalytic core and F(0) containing the membrane proton channel, linked together by a central stalk and a peripheral stalk. During catalysis, ATP synthesis in the catalytic domain of F(1) is coupled via a rotary mechanism of the central stalk subunits to proton translocation. In terms of biological role, component of the F(0) channel, it forms part of the peripheral stalk, linking F(1) to F(0). The polypeptide is ATP synthase subunit b 1 (Rhizobium etli (strain CIAT 652)).